A 283-amino-acid chain; its full sequence is ATP synthase gamma chain (283 aa).

It belongs to the ATPase gamma chain family. As to quaternary structure, F-type ATPases have 2 components, CF(1) - the catalytic core - and CF(0) - the membrane proton channel. CF(1) has five subunits: alpha(3), beta(3), gamma(1), delta(1), epsilon(1). CF(0) has three main subunits: a, b and c.

It localises to the cell inner membrane. In terms of biological role, produces ATP from ADP in the presence of a proton gradient across the membrane. The gamma chain is believed to be important in regulating ATPase activity and the flow of protons through the CF(0) complex. The polypeptide is ATP synthase gamma chain (Ehrlichia ruminantium (strain Welgevonden)).